Here is a 159-residue protein sequence, read N- to C-terminus: Ribosome-binding factor A (159 aa).

The tract at residues 127–159 is disordered; sequence TYAGEADPYRRPAVDDAGDSADDADPAEDERPS. The segment covering 142–159 has biased composition (acidic residues); it reads DAGDSADDADPAEDERPS.

Belongs to the RbfA family. As to quaternary structure, monomer. Binds 30S ribosomal subunits, but not 50S ribosomal subunits or 70S ribosomes.

The protein localises to the cytoplasm. One of several proteins that assist in the late maturation steps of the functional core of the 30S ribosomal subunit. Associates with free 30S ribosomal subunits (but not with 30S subunits that are part of 70S ribosomes or polysomes). Required for efficient processing of 16S rRNA. May interact with the 5'-terminal helix region of 16S rRNA. The sequence is that of Ribosome-binding factor A from Beutenbergia cavernae (strain ATCC BAA-8 / DSM 12333 / CCUG 43141 / JCM 11478 / NBRC 16432 / NCIMB 13614 / HKI 0122).